Here is a 314-residue protein sequence, read N- to C-terminus: Caspase-like protein (314 aa).

This sequence belongs to the peptidase C14A family.

Functionally, may be involved in viral replication. This Heliothis virescens ascovirus 3e (HvAV-3e) protein is Caspase-like protein.